The chain runs to 648 residues: Macrolide export ATP-binding/permease protein MacB (648 aa).

The 239-residue stretch at 5–243 folds into the ABC transporter domain; the sequence is LELCNVSRSY…QGVDAAVVNT (239 aa). 41–48 contributes to the ATP binding site; the sequence is GVSGSGKS. Helical transmembrane passes span 273 to 293, 417 to 437, 523 to 543, 578 to 598, and 611 to 631; these read LLTMLGIIIGIASVVSIVVVG, ANVVGEVVLVGNMPVIVIGVA, LFLTLVAVISLVVGGIGVMNI, LVCLVGGALGISLSMFIAFML, and LTALASAFLCSTFTGILFGWL.

Belongs to the ABC transporter superfamily. Macrolide exporter (TC 3.A.1.122) family. In terms of assembly, homodimer. Part of the tripartite efflux system MacAB-TolC, which is composed of an inner membrane transporter, MacB, a periplasmic membrane fusion protein, MacA, and an outer membrane component, TolC. The complex forms a large protein conduit and can translocate molecules across both the inner and outer membranes. Interacts with MacA.

It localises to the cell inner membrane. In terms of biological role, part of the tripartite efflux system MacAB-TolC. MacB is a non-canonical ABC transporter that contains transmembrane domains (TMD), which form a pore in the inner membrane, and an ATP-binding domain (NBD), which is responsible for energy generation. Confers resistance against macrolides. This is Macrolide export ATP-binding/permease protein MacB from Salmonella paratyphi A (strain ATCC 9150 / SARB42).